The primary structure comprises 223 residues: Protein DEHYDRATION-INDUCED 19 homolog 3 (223 aa).

T114 is modified (phosphothreonine). S116 is subject to Phosphoserine.

The protein belongs to the Di19 family. Phosphorylated in vitro by CPK3 or CPK11. As to expression, expressed in seedlings, roots, leaves, stems, flowers and siliques.

The protein localises to the nucleus. In Arabidopsis thaliana (Mouse-ear cress), this protein is Protein DEHYDRATION-INDUCED 19 homolog 3 (DI19-3).